Reading from the N-terminus, the 154-residue chain is Spermatogenesis-associated protein 19, mitochondrial (154 aa).

A mitochondrion-targeting transit peptide spans 1-24 (MIITTWIMYIFARKTVGLPFPPRV). Phosphoserine occurs at positions 26 and 116.

As to expression, expressed specifically in adult testis (at protein level).

The protein resides in the mitochondrion outer membrane. It localises to the mitochondrion. It is found in the cell projection. Its subcellular location is the cilium. The protein localises to the flagellum. Essential for sperm motility and male fertility. Plays an important role in sperm motility by regulating the organization and function of the mitochondria and is also required for correct sperm midpiece assembly. The polypeptide is Spermatogenesis-associated protein 19, mitochondrial (Spata19) (Mus musculus (Mouse)).